The primary structure comprises 386 residues: GTPase Obg (386 aa).

Residues 1–159 (MKFVDEAVIR…RSLKLELMLL (159 aa)) enclose the Obg domain. Positions 160 to 333 (ADVGLLGMPN…LSLKLVDFID (174 aa)) constitute an OBG-type G domain. GTP is bound by residues 166–173 (GMPNAGKS), 191–195 (FTTLV), 213–216 (DIPG), 283–286 (NKKD), and 314–316 (SAY). Mg(2+)-binding residues include Ser-173 and Thr-193. Residues 356-375 (KDSDSLNEDFDDSDDDDFDD) form a disordered region. The segment covering 360–375 (SLNEDFDDSDDDDFDD) has biased composition (acidic residues).

It belongs to the TRAFAC class OBG-HflX-like GTPase superfamily. OBG GTPase family. As to quaternary structure, monomer. It depends on Mg(2+) as a cofactor.

The protein localises to the cytoplasm. An essential GTPase which binds GTP, GDP and possibly (p)ppGpp with moderate affinity, with high nucleotide exchange rates and a fairly low GTP hydrolysis rate. Plays a role in control of the cell cycle, stress response, ribosome biogenesis and in those bacteria that undergo differentiation, in morphogenesis control. The sequence is that of GTPase Obg from Shewanella sediminis (strain HAW-EB3).